The chain runs to 332 residues: Ribosomal RNA small subunit methyltransferase C (332 aa).

The protein belongs to the methyltransferase superfamily. RsmC family. Monomer.

The protein localises to the cytoplasm. The catalysed reaction is guanosine(1207) in 16S rRNA + S-adenosyl-L-methionine = N(2)-methylguanosine(1207) in 16S rRNA + S-adenosyl-L-homocysteine + H(+). Functionally, specifically methylates the guanine in position 1207 of 16S rRNA in the 30S particle. The chain is Ribosomal RNA small subunit methyltransferase C from Pseudomonas syringae pv. tomato (strain ATCC BAA-871 / DC3000).